Here is a 1353-residue protein sequence, read N- to C-terminus: Patatin-like phospholipase domain-containing protein ZK370.4 (1353 aa).

Residues 12 to 32 (IFLVTFIYNHVLLILFTVCII) form a helical membrane-spanning segment. The span at 49–64 (TPSSASSSATPSSRNS) shows a compositional bias: low complexity. Disordered regions lie at residues 49 to 188 (TPSS…STAF) and 199 to 218 (SRSY…VRPP). A compositionally biased stretch (polar residues) spans 91-123 (SPKSGTPTNTQTIEPPTSLNLNMVNSASGSNLS). Basic residues-rich tracts occupy residues 126-138 (RRMR…KKLY) and 170-184 (PRRR…RRRQ). A nucleoside 3',5'-cyclic phosphate contacts are provided by residues 245-372 (LKML…VITR), 444-581 (FGLV…VLRR), and 570-692 (IYLP…LGQY). The PNPLA domain occupies 942-1108 (LVLGGGGARG…VNNVPADVMR (167 aa)). A GXGXXG motif is present at residues 946 to 951 (GGGARG). The GXSXG motif lies at 973 to 977 (GTSIG). The active-site Nucleophile is the Ser-975. Asp-1095 serves as the catalytic Proton acceptor. The DGA/G signature appears at 1095–1097 (DGG). 3 disordered regions span residues 1230 to 1249 (EKET…PDVS), 1274 to 1293 (SMSL…DHFL), and 1305 to 1353 (YEEE…PPSS). Low complexity predominate over residues 1328-1337 (GPPSSSSSGG).

This sequence belongs to the NTE family.

It localises to the membrane. The chain is Patatin-like phospholipase domain-containing protein ZK370.4 from Caenorhabditis elegans.